The following is a 253-amino-acid chain: MSGEVAAAVGGGAPEENGAPPNVTIYINNLNEKIKLEELKKSLRAVFSQFGKILDVLAFKTLKHKGQAWVVFEDVASATEALKSMQDFPFHNKPMRIQYAKTKSDIIAKADGTFVPRERRKRNDEKPEKKQKREQHHDVSQVGLGVNAYPGVYGAPPLSQLPFAGAQKVMMPEIIVPNNILFVQNLPHETTPMMLQMLFCQYPGFKEVRMVEAKPGIAFVEYGDEGQATAAMNHLQGFKITKDNQMLISYAKK.

Residues 23–102 (VTIYINNLNE…KPMRIQYAKT (80 aa)) form the RRM 1 domain. The tract at residues 111 to 140 (DGTFVPRERRKRNDEKPEKKQKREQHHDVS) is disordered. Residues 179–253 (NILFVQNLPH…NQMLISYAKK (75 aa)) enclose the RRM 2 domain.

The protein belongs to the RRM U1 A/B'' family. Component of the spliceosome where it is associated with snRNP U1.

Its subcellular location is the nucleus. The protein localises to the nucleolus. In terms of biological role, involved in nuclear pre-mRNA splicing. The sequence is that of U1 small nuclear ribonucleoprotein A from Oryza sativa subsp. indica (Rice).